Here is a 176-residue protein sequence, read N- to C-terminus: Scytalone dehydratase-like protein AacuK (176 aa).

Substrate-binding residues include tyrosine 26 and tyrosine 46. Active-site residues include histidine 81 and histidine 107.

It belongs to the scytalone dehydratase family.

It functions in the pathway secondary metabolite biosynthesis. Its function is as follows. Scytalone dehydratase-like protein; part of the gene cluster that mediates the biosynthesis of the tetrahydroxanthone dimer secalonic acid D. The pathway begins with the synthesis of atrochrysone thioester by the polyketide synthase AacuL. The atrochrysone carboxyl ACP thioesterase AacuM then breaks the thioester bond and releases the atrochrysone carboxylic acid from AacuL. Atrochrysone carboxylic acid is decarboxylated by the decarboxylase AacuI, and oxidized by the anthrone oxygenase AacuG to yield emodin. Emodin is then reduced to emodin hydroquinone by a yet unidentified oxidoreductase. A-ring reduction by the short chain dehydrogenase AacuN, dehydration by the scytalone dehydratase-like protein AacuK and probable spontaneous re-oxidation, results in overall deoxygenation to chrysophanol. Baeyer-Villiger oxidation by the Baeyer-Villiger monooxygenase (BVMO) AacuH then yields monodictyphenone. Monodictyphenone is transformed into compounds with the tetrahydroxanthone skeleton via methylesterification by the methyltransferase AacuQ, followed by the action of the flavin-dependent monooxygenase AacuC, the isomerase AacuP, and the short chain dehydrogenase/reductase AacuF or AacuD. AacuF and AacuD should accept the same compound as a substrate but perform the ketoreduction with a different stereoselectivity, thus yielding blennolides B and A, respectively. In the final step of the biosynthesis, the cytochrome P450 monooxygenase AacuE accepts blennolide B and/or blennolide A to conduct the dimerization reaction to furnish the tetrahydroxanthone dimers, secalonic acids D, B, and F. The chain is Scytalone dehydratase-like protein AacuK from Aspergillus aculeatus (strain ATCC 16872 / CBS 172.66 / WB 5094).